The following is a 182-amino-acid chain: Crossover junction endodeoxyribonuclease RuvC (182 aa).

Catalysis depends on residues aspartate 7, glutamate 69, and aspartate 141. Mg(2+)-binding residues include aspartate 7, glutamate 69, and aspartate 141.

This sequence belongs to the RuvC family. In terms of assembly, homodimer which binds Holliday junction (HJ) DNA. The HJ becomes 2-fold symmetrical on binding to RuvC with unstacked arms; it has a different conformation from HJ DNA in complex with RuvA. In the full resolvosome a probable DNA-RuvA(4)-RuvB(12)-RuvC(2) complex forms which resolves the HJ. The cofactor is Mg(2+).

The protein localises to the cytoplasm. The enzyme catalyses Endonucleolytic cleavage at a junction such as a reciprocal single-stranded crossover between two homologous DNA duplexes (Holliday junction).. Its function is as follows. The RuvA-RuvB-RuvC complex processes Holliday junction (HJ) DNA during genetic recombination and DNA repair. Endonuclease that resolves HJ intermediates. Cleaves cruciform DNA by making single-stranded nicks across the HJ at symmetrical positions within the homologous arms, yielding a 5'-phosphate and a 3'-hydroxyl group; requires a central core of homology in the junction. The consensus cleavage sequence is 5'-(A/T)TT(C/G)-3'. Cleavage occurs on the 3'-side of the TT dinucleotide at the point of strand exchange. HJ branch migration catalyzed by RuvA-RuvB allows RuvC to scan DNA until it finds its consensus sequence, where it cleaves and resolves the cruciform DNA. The protein is Crossover junction endodeoxyribonuclease RuvC of Delftia acidovorans (strain DSM 14801 / SPH-1).